The chain runs to 197 residues: Chromophore lyase CpcT/CpeT (197 aa).

This sequence belongs to the CpcT/CpeT biliprotein lyase family.

In terms of biological role, covalently attaches a chromophore to Cys residue(s) of phycobiliproteins. The polypeptide is Chromophore lyase CpcT/CpeT (Synechococcus sp. (strain WH8103)).